The chain runs to 217 residues: Octanoyltransferase (217 aa).

Residues Ser33–Ser208 enclose the BPL/LPL catalytic domain. Substrate-binding positions include Arg72–His79, Ser139–Gly141, and Gly152–Ala154. Catalysis depends on Cys170, which acts as the Acyl-thioester intermediate.

This sequence belongs to the LipB family.

The protein localises to the cytoplasm. It catalyses the reaction octanoyl-[ACP] + L-lysyl-[protein] = N(6)-octanoyl-L-lysyl-[protein] + holo-[ACP] + H(+). It participates in protein modification; protein lipoylation via endogenous pathway; protein N(6)-(lipoyl)lysine from octanoyl-[acyl-carrier-protein]: step 1/2. Functionally, catalyzes the transfer of endogenously produced octanoic acid from octanoyl-acyl-carrier-protein onto the lipoyl domains of lipoate-dependent enzymes. Lipoyl-ACP can also act as a substrate although octanoyl-ACP is likely to be the physiological substrate. The protein is Octanoyltransferase of Pseudoalteromonas atlantica (strain T6c / ATCC BAA-1087).